We begin with the raw amino-acid sequence, 214 residues long: MKFFIDTANIDEIKEANSMGMVDGVTTNPSLIAKEGRPFEDIIKDICAEVDGPISAEVISTEAKSMIEEGKKLAAIHKNIVIKIPMIPDGMIATRALSSEGIPVNVTLVFSPLQALVAAKAGAAFVSPFVGRLDDLANEGMLLIEQMVTIYNNYAFDTEVLVASVRNPLHVLEAAMMGADVATIPFGVIKKMMGHPLTDKGLAAFLADYEKSKK.

Lys83 functions as the Schiff-base intermediate with substrate in the catalytic mechanism.

Belongs to the transaldolase family. Type 3B subfamily.

Its subcellular location is the cytoplasm. The catalysed reaction is D-sedoheptulose 7-phosphate + D-glyceraldehyde 3-phosphate = D-erythrose 4-phosphate + beta-D-fructose 6-phosphate. Its pathway is carbohydrate degradation; pentose phosphate pathway; D-glyceraldehyde 3-phosphate and beta-D-fructose 6-phosphate from D-ribose 5-phosphate and D-xylulose 5-phosphate (non-oxidative stage): step 2/3. Functionally, transaldolase is important for the balance of metabolites in the pentose-phosphate pathway. In Desulfatibacillum aliphaticivorans, this protein is Probable transaldolase.